Reading from the N-terminus, the 323-residue chain is Beta-ketoacyl-[acyl-carrier-protein] synthase III (323 aa).

Active-site residues include Cys114 and His250. The ACP-binding stretch occupies residues 251-255 (QANIR). Asn280 is a catalytic residue.

This sequence belongs to the thiolase-like superfamily. FabH family. Homodimer.

The protein resides in the cytoplasm. The catalysed reaction is malonyl-[ACP] + acetyl-CoA + H(+) = 3-oxobutanoyl-[ACP] + CO2 + CoA. It participates in lipid metabolism; fatty acid biosynthesis. Its function is as follows. Catalyzes the condensation reaction of fatty acid synthesis by the addition to an acyl acceptor of two carbons from malonyl-ACP. Catalyzes the first condensation reaction which initiates fatty acid synthesis and may therefore play a role in governing the total rate of fatty acid production. Possesses both acetoacetyl-ACP synthase and acetyl transacylase activities. Its substrate specificity determines the biosynthesis of branched-chain and/or straight-chain of fatty acids. This Roseobacter denitrificans (strain ATCC 33942 / OCh 114) (Erythrobacter sp. (strain OCh 114)) protein is Beta-ketoacyl-[acyl-carrier-protein] synthase III.